Reading from the N-terminus, the 685-residue chain is MWLKLFFLLLYFLVLFVLARFFEAIVWYETGIFATQLVDPVALSFKKLKTILECRGLGYSGLPEKKDVRELVEKSGDLMEGELYSALKEEEASESVSSTNFSGEMHFYELVEDTKDGIWLVQVIANDRSPLVGKIHWEKMVKKVSRFGIRTGTFNCSSDPRYCRRRGWVRSTLIMSVPQTSTSKGKVMLKEYSGRKIEVEHIFKWITAHAASRIKTIYNAEHLKEEWNKSDQYWLKIYLFANLDQPPAFFSALSIKFTGRVEFIFVNVENWDNKSYMTDIGIYNMPSYILRTPEGIYRYGNHTGEFISLQAMDSFLRSLQPEVNDLFVLSLVLVNLMAWMDLFITQGATIKRFVVLISTLGTYNSLLIISWLPVLGFLQLPYLDSFYEYSLKLLRYSNTTTLASWVRADWMFYSSHPALFLSTYLGHGLLIDYFEKKRRRNNNNDEVNANNLEWLSSLWDWYTSYLFHPIASFQNFPVESDWDEDPDLFLERLAFPDLWLHPLIPTDYIKNLPMWRFKCLGVQSEEEMSEGSQDTENDSESENTDTLSSEKEVFEDKQSVLHNSPGTASHCDAEACSCANKYCQTSPCERKGRSYGSYNTNEDMEPDWLTWPADMLHCTECVVCLENFENGCLLMGLPCGHVFHQNCIVMWLAGGRHCCPVCRWPSYKKKQPYAQHQPLSNDVPS.

4 helical membrane passes run 6–26, 326–346, 366–386, and 411–431; these read FFLL…EAIV, LFVL…FITQ, LLII…LDSF, and MFYS…GLLI. Positions 526–543 are enriched in acidic residues; that stretch reads EEMSEGSQDTENDSESEN. The interval 526 to 550 is disordered; the sequence is EEMSEGSQDTENDSESENTDTLSSE. The segment at 621–663 adopts an RING-type zinc-finger fold; sequence CVVCLENFENGCLLMGLPCGHVFHQNCIVMWLAGGRHCCPVCR.

In terms of assembly, interacts with DERL1 and VCP. Highly expressed in the normal cerebellum but not in the cerebral cortex.

It localises to the endoplasmic reticulum membrane. It catalyses the reaction S-ubiquitinyl-[E2 ubiquitin-conjugating enzyme]-L-cysteine + [acceptor protein]-L-lysine = [E2 ubiquitin-conjugating enzyme]-L-cysteine + N(6)-ubiquitinyl-[acceptor protein]-L-lysine.. It functions in the pathway protein modification; protein ubiquitination. Its function is as follows. Acts as an E2-dependent E3 ubiquitin-protein ligase, probably involved in the ER-associated protein degradation pathway. The protein is E3 ubiquitin-protein ligase RNF103 (RNF103) of Homo sapiens (Human).